Reading from the N-terminus, the 147-residue chain is MVHWTPEEKQYITSLWAKVNVEEVGGEALARLLIVYPWTQRFFSSFGNLSSASAILHNAKVLAHGKKVLTSFGDAVKNLDNIKKTFAQLSELHCEKLHVDPENFKLLGNILIIVLATRFPKEFTPASQAAWTKLVNAVAHALALGYH.

A Globin domain is found at histidine 3–histidine 147. The heme b site is built by histidine 64 and histidine 93.

Belongs to the globin family. Heterotetramer of two alpha-D chains and two beta chains. In terms of tissue distribution, red blood cells.

In terms of biological role, involved in oxygen transport from the lung to the various peripheral tissues. The polypeptide is Hemoglobin subunit beta (HBB) (Chelonoidis niger (Galapagos giant tortoise)).